Consider the following 523-residue polypeptide: Beta-glucosidase 31 (523 aa).

The N-terminal stretch at 1 to 22 (MTPARVVFICCVVLLAAAAAAA) is a signal peptide. A beta-D-glucoside is bound by residues Q49, H149, and 194 to 195 (NE). E195 functions as the Proton donor in the catalytic mechanism. C214 and C223 are disulfide-bonded. N227 is a glycosylation site (N-linked (GlcNAc...) asparagine). The a beta-D-glucoside site is built by Y339 and E413. E413 acts as the Nucleophile in catalysis. A glycan (N-linked (GlcNAc...) asparagine) is linked at N450. Residues W460, 467–468 (EY), and F476 contribute to the a beta-D-glucoside site.

This sequence belongs to the glycosyl hydrolase 1 family.

The enzyme catalyses Hydrolysis of terminal, non-reducing beta-D-glucosyl residues with release of beta-D-glucose.. In Oryza sativa subsp. japonica (Rice), this protein is Beta-glucosidase 31 (BGLU31).